The chain runs to 335 residues: NmrA-like family domain-containing oxidoreductase hkm9 (335 aa).

NADP(+) contacts are provided by residues 12 to 17 (GATGNQ), 38 to 42 (RNPNS), 59 to 60 (DG), 80 to 82 (INS), Lys137, and 161 to 164 (YLEN).

The protein belongs to the NmrA-type oxidoreductase family.

Its pathway is secondary metabolite biosynthesis. NmrA-like family domain-containing oxidoreductase; part of the gene cluster that mediates the biosynthesis of hancockiamides, an unusual new family of N-cinnamoylated piperazines. The NRPS hkm10 and the NmrA-like reductase hkm9 are proposed to convert two molecules of L-Phe to the intermediary piperazine called xenocockiamide A. Xenocockiamide A is then converted to hancockiamide D via a series of hydroxylations and O-methylations. The tyrosinase hkm6 may catalyze an aromatic hydroxylation, then the 2-oxoglutarate-dependent Fe(II) dioxygenase hkm4 and the FAD-dependent phenol hydroxylase hkm7 may catalyze consecutive hydroxylations to install 2 more hydroxy groups, and the methyltransferase hkm8 probably catalyzes two methylations using 2 molecules of S-adenosyl-L-methionine (SAM). The NRPS hkm11 activates and transfers trans-cinnamate supplied by the PAL hkm12 to hancockiamide D and produces hancockiamide A. NRPS Hkm11 has the flexibility to tolerate the bulky hancockiamide G as a substrate and the absence of the acetyl-transferase hkm3 opens up the opportunity for hkm11 to introduce a second N-cinnamoyl moiety. The cytochrome P450 monooxygenase hkm5 catalyzes the methylenedioxy bridge formation, converting hancockiamide A into hancockiamide G. Hkm5 can also convert hancockiamide B into hancockiamide C, and hancockiamide D into hancockiamide H. The N-acetyltransferase hkm3 finally transfers an acetyl group to 1-N of piperazine, converting hancockiamide A into hancockiamide B and hancockiamide G into hancockiamide C. The chain is NmrA-like family domain-containing oxidoreductase hkm9 from Aspergillus hancockii.